The primary structure comprises 357 residues: Probable nitronate monooxygenase (357 aa).

Residues Asn71, Gln175, Gly180, Gly219, and 238–241 (QMGT) each bind FMN.

This sequence belongs to the nitronate monooxygenase family. NMO class I subfamily. Requires FMN as cofactor.

It carries out the reaction 3 propionate 3-nitronate + 3 O2 + H2O = 3 3-oxopropanoate + 2 nitrate + nitrite + H2O2 + 3 H(+). In terms of biological role, nitronate monooxygenase that uses molecular oxygen to catalyze the oxidative denitrification of alkyl nitronates. Acts on propionate 3-nitronate (P3N), the presumed physiological substrate. Probably functions in the detoxification of P3N, a metabolic poison produced by plants and fungi as a defense mechanism. The protein is Probable nitronate monooxygenase of Staphylococcus haemolyticus (strain JCSC1435).